A 444-amino-acid polypeptide reads, in one-letter code: ATP-dependent protease ATPase subunit HslU (444 aa).

ATP-binding positions include I18 and 60–65; that span reads GVGKTE. The disordered stretch occupies residues 143 to 163; that stretch reads WGEVENHDSHSSTRQAFRKKL. Residues D257, E322, and R394 each coordinate ATP.

It belongs to the ClpX chaperone family. HslU subfamily. In terms of assembly, a double ring-shaped homohexamer of HslV is capped on each side by a ring-shaped HslU homohexamer. The assembly of the HslU/HslV complex is dependent on binding of ATP.

It localises to the cytoplasm. Its function is as follows. ATPase subunit of a proteasome-like degradation complex; this subunit has chaperone activity. The binding of ATP and its subsequent hydrolysis by HslU are essential for unfolding of protein substrates subsequently hydrolyzed by HslV. HslU recognizes the N-terminal part of its protein substrates and unfolds these before they are guided to HslV for hydrolysis. This chain is ATP-dependent protease ATPase subunit HslU, found in Haemophilus influenzae (strain 86-028NP).